The chain runs to 248 residues: Coenzyme F420:L-glutamate ligase (248 aa).

GTP contacts are provided by residues 15 to 18 (IPLI), 45 to 46 (ET), and Lys50. Asp115 contacts a divalent metal cation. Asn118 is a binding site for GTP. 3 residues coordinate a divalent metal cation: Asp155, Ser156, and Gln213. 211–218 (MGQSNEGI) contacts GTP.

Belongs to the CofE family. Homodimer. Mg(2+) serves as cofactor. The cofactor is Mn(2+). It depends on K(+) as a cofactor.

The enzyme catalyses oxidized coenzyme F420-0 + GTP + L-glutamate = oxidized coenzyme F420-1 + GDP + phosphate + H(+). It catalyses the reaction oxidized coenzyme F420-1 + GTP + L-glutamate = oxidized coenzyme F420-2 + GDP + phosphate + H(+). The protein operates within cofactor biosynthesis; coenzyme F420 biosynthesis. In terms of biological role, catalyzes the GTP-dependent successive addition of two or more gamma-linked L-glutamates to the L-lactyl phosphodiester of 7,8-didemethyl-8-hydroxy-5-deazariboflavin (F420-0) to form coenzyme F420-0-glutamyl-glutamate (F420-2) or polyglutamated F420 derivatives. This is Coenzyme F420:L-glutamate ligase from Methanococcus maripaludis (strain C7 / ATCC BAA-1331).